We begin with the raw amino-acid sequence, 311 residues long: Mitoferrin (311 aa).

Solcar repeat units follow at residues 15 to 102 (HSIP…MKSF), 111 to 195 (EHTL…WQQV), and 202 to 302 (YDPK…FKFM). The next 6 helical transmembrane spans lie at 17–36 (IPVHLAAGALAGAVEHCVMF), 77–96 (GVNAVAAGSMPAHALYFTVY), 112–132 (HTLAYGASGVVATLIHDAVMN), 170–189 (SYTTQLAMNVPFQAIHFMGY), 204–223 (PKSHLIAGGLAGGLAAAVTT), and 277–296 (GLQARVIFQVPATALSWSVY).

This sequence belongs to the mitochondrial carrier (TC 2.A.29) family.

The protein localises to the mitochondrion inner membrane. In terms of biological role, mitochondrial iron transporter that mediates iron uptake. Probably required for heme synthesis of hemoproteins and Fe-S cluster assembly. In Caenorhabditis briggsae, this protein is Mitoferrin.